A 513-amino-acid chain; its full sequence is MTSDDTDDTAGADDVALDPWGSATISDYRALFDEFGIEAFEDVLDGVPTPHSLMRRAIIFGHRDYRRVAAAMRNDEPFAALSGFMPTGDPHIGHKMVFDELIWHQQQGGDAYALIADLEAHSARGLDWAEIDEHAEDYLLSLLALGFDADEGELYRQSTNRELQDLAFELGIEANTSEFEAIYGFGGDTDVSHMQSVVTQMADILYPQLDAPKPTVIPVGPDQDPHVRFARDLAERTRYFKVTEAFASVAFDDDERPLVRAAYDARSQYAADTDQPRCTEAADWLAAEPAAADGVDAATAESVVQKLENAGMEPLRPRVRFFDRQATDEAFTALIDEIAGEKRVFEGHVDAFELSAETARDLALAVEVDHGGYGFVPPSSVYHRFMTGLTGGKMSSSEPASHISLLDDPETGADKVAAATTGGRDTAAEQRERGGEPDDCPVYELYAYLLAGDDDALAEEVYAECANGDRLCGGCKEQAADLMAQFLETHQENREAARDVLAELDIDLDSARV.

Positions 86 to 94 match the 'HIGH' region motif; the sequence is PTGDPHIGH. The short motif at 393–397 is the 'KMSKS' region element; that stretch reads KMSSS.

Belongs to the class-I aminoacyl-tRNA synthetase family.

The protein resides in the cytoplasm. It carries out the reaction tRNA(Trp) + L-tryptophan + ATP = L-tryptophyl-tRNA(Trp) + AMP + diphosphate + H(+). In Halobacterium salinarum (strain ATCC 700922 / JCM 11081 / NRC-1) (Halobacterium halobium), this protein is Tryptophan--tRNA ligase 1.